A 275-amino-acid polypeptide reads, in one-letter code: NH(3)-dependent NAD(+) synthetase (275 aa).

43–50 (GISGGVDS) provides a ligand contact to ATP. A Mg(2+)-binding site is contributed by D49. A deamido-NAD(+)-binding site is contributed by R145. ATP is bound at residue T165. E170 contributes to the Mg(2+) binding site. Deamido-NAD(+) contacts are provided by K178 and D185. 2 residues coordinate ATP: K194 and T216. 265–266 (HK) is a deamido-NAD(+) binding site.

Belongs to the NAD synthetase family. In terms of assembly, homodimer.

It carries out the reaction deamido-NAD(+) + NH4(+) + ATP = AMP + diphosphate + NAD(+) + H(+). Its pathway is cofactor biosynthesis; NAD(+) biosynthesis; NAD(+) from deamido-NAD(+) (ammonia route): step 1/1. Its function is as follows. Catalyzes the ATP-dependent amidation of deamido-NAD to form NAD. Uses ammonia as a nitrogen source. The protein is NH(3)-dependent NAD(+) synthetase of Shewanella denitrificans (strain OS217 / ATCC BAA-1090 / DSM 15013).